The chain runs to 828 residues: Periplasmic nitrate reductase (828 aa).

A signal peptide (tat-type signal) is located at residues 1–31 (MKLSRRSFMKANAVAAAAAAAGLSVPGVARA). One can recognise a 4Fe-4S Mo/W bis-MGD-type domain in the interval 39-95 (IKWDKAPCRFCGTGCGVLVGTQQGRVVACQGDPDAPVNRGLNCIKGYFLPKIMYGKD). [4Fe-4S] cluster is bound by residues Cys-46, Cys-49, Cys-53, and Cys-81. Mo-bis(molybdopterin guanine dinucleotide)-binding positions include Lys-83, Gln-150, Asn-175, Cys-179, 212–219 (WGSNMAEM), 243–247 (STFQH), 262–264 (QSD), Met-372, Gln-376, Asn-482, 508–509 (SD), Lys-531, Asp-558, and 718–727 (TGRVLEHWHT). Phe-794 is a binding site for substrate. Residues Asn-802 and Lys-819 each coordinate Mo-bis(molybdopterin guanine dinucleotide).

It belongs to the prokaryotic molybdopterin-containing oxidoreductase family. NasA/NapA/NarB subfamily. Component of the periplasmic nitrate reductase NapAB complex composed of NapA and NapB. [4Fe-4S] cluster serves as cofactor. Mo-bis(molybdopterin guanine dinucleotide) is required as a cofactor. Post-translationally, predicted to be exported by the Tat system. The position of the signal peptide cleavage has not been experimentally proven.

It localises to the periplasm. The enzyme catalyses 2 Fe(II)-[cytochrome] + nitrate + 2 H(+) = 2 Fe(III)-[cytochrome] + nitrite + H2O. Its function is as follows. Catalytic subunit of the periplasmic nitrate reductase complex NapAB. Receives electrons from NapB and catalyzes the reduction of nitrate to nitrite. This Salmonella paratyphi C (strain RKS4594) protein is Periplasmic nitrate reductase.